The sequence spans 227 residues: Cytochrome c oxidase subunit 2 (227 aa).

Residues Met1–Ser14 lie on the Mitochondrial intermembrane side of the membrane. The chain crosses the membrane as a helical span at residues Pro15 to Met45. Topologically, residues Leu46–Gln59 are mitochondrial matrix. The chain crosses the membrane as a helical span at residues Glu60–Met87. At Asp88–Ile227 the chain is on the mitochondrial intermembrane side. Residues His161, Cys196, Glu198, Cys200, His204, and Met207 each contribute to the Cu cation site. Glu198 lines the Mg(2+) pocket. At Tyr218 the chain carries Phosphotyrosine.

The protein belongs to the cytochrome c oxidase subunit 2 family. Component of the cytochrome c oxidase (complex IV, CIV), a multisubunit enzyme composed of 14 subunits. The complex is composed of a catalytic core of 3 subunits MT-CO1, MT-CO2 and MT-CO3, encoded in the mitochondrial DNA, and 11 supernumerary subunits COX4I, COX5A, COX5B, COX6A, COX6B, COX6C, COX7A, COX7B, COX7C, COX8 and NDUFA4, which are encoded in the nuclear genome. The complex exists as a monomer or a dimer and forms supercomplexes (SCs) in the inner mitochondrial membrane with NADH-ubiquinone oxidoreductase (complex I, CI) and ubiquinol-cytochrome c oxidoreductase (cytochrome b-c1 complex, complex III, CIII), resulting in different assemblies (supercomplex SCI(1)III(2)IV(1) and megacomplex MCI(2)III(2)IV(2)). Found in a complex with TMEM177, COA6, COX18, COX20, SCO1 and SCO2. Interacts with TMEM177 in a COX20-dependent manner. Interacts with COX20. Interacts with COX16. It depends on Cu cation as a cofactor.

It localises to the mitochondrion inner membrane. It catalyses the reaction 4 Fe(II)-[cytochrome c] + O2 + 8 H(+)(in) = 4 Fe(III)-[cytochrome c] + 2 H2O + 4 H(+)(out). In terms of biological role, component of the cytochrome c oxidase, the last enzyme in the mitochondrial electron transport chain which drives oxidative phosphorylation. The respiratory chain contains 3 multisubunit complexes succinate dehydrogenase (complex II, CII), ubiquinol-cytochrome c oxidoreductase (cytochrome b-c1 complex, complex III, CIII) and cytochrome c oxidase (complex IV, CIV), that cooperate to transfer electrons derived from NADH and succinate to molecular oxygen, creating an electrochemical gradient over the inner membrane that drives transmembrane transport and the ATP synthase. Cytochrome c oxidase is the component of the respiratory chain that catalyzes the reduction of oxygen to water. Electrons originating from reduced cytochrome c in the intermembrane space (IMS) are transferred via the dinuclear copper A center (CU(A)) of subunit 2 and heme A of subunit 1 to the active site in subunit 1, a binuclear center (BNC) formed by heme A3 and copper B (CU(B)). The BNC reduces molecular oxygen to 2 water molecules using 4 electrons from cytochrome c in the IMS and 4 protons from the mitochondrial matrix. The polypeptide is Cytochrome c oxidase subunit 2 (MT-CO2) (Maxomys surifer (Indomalayan maxomys)).